The primary structure comprises 197 residues: Phosphoheptose isomerase (197 aa).

The region spanning Met-36–Glu-197 is the SIS domain. Position 51 to 53 (Asn-51 to Gly-53) interacts with substrate. Zn(2+) contacts are provided by His-60 and Glu-64. Substrate-binding positions include Glu-64, Asn-93–Asp-94, Ser-119–Ser-121, Ser-124, and Gln-174. 2 residues coordinate Zn(2+): Gln-174 and His-182.

The protein belongs to the SIS family. GmhA subfamily. In terms of assembly, homotetramer. Requires Zn(2+) as cofactor.

It is found in the cytoplasm. The enzyme catalyses 2 D-sedoheptulose 7-phosphate = D-glycero-alpha-D-manno-heptose 7-phosphate + D-glycero-beta-D-manno-heptose 7-phosphate. The protein operates within carbohydrate biosynthesis; D-glycero-D-manno-heptose 7-phosphate biosynthesis; D-glycero-alpha-D-manno-heptose 7-phosphate and D-glycero-beta-D-manno-heptose 7-phosphate from sedoheptulose 7-phosphate: step 1/1. In terms of biological role, catalyzes the isomerization of sedoheptulose 7-phosphate in D-glycero-D-manno-heptose 7-phosphate. This is Phosphoheptose isomerase from Pseudomonas aeruginosa (strain LESB58).